A 160-amino-acid polypeptide reads, in one-letter code: Cytochrome b6-f complex subunit 4 (160 aa).

Transmembrane regions (helical) follow at residues 36–56, 95–115, and 131–151; these read LLYI…GLAV, LLGV…PFLE, and TVFL…TLPI.

This sequence belongs to the cytochrome b family. PetD subfamily. As to quaternary structure, the 4 large subunits of the cytochrome b6-f complex are cytochrome b6, subunit IV (17 kDa polypeptide, petD), cytochrome f and the Rieske protein, while the 4 small subunits are petG, petL, petM and petN. The complex functions as a dimer.

It localises to the plastid. The protein resides in the chloroplast thylakoid membrane. Its function is as follows. Component of the cytochrome b6-f complex, which mediates electron transfer between photosystem II (PSII) and photosystem I (PSI), cyclic electron flow around PSI, and state transitions. The chain is Cytochrome b6-f complex subunit 4 from Solanum tuberosum (Potato).